The following is an 87-amino-acid chain: Putative sodium channel toxin Ts40 (87 aa).

The signal sequence occupies residues 1-19 (MTALFYLLFLTSVIIETHQ). Disulfide bonds link cysteine 41-cysteine 63, cysteine 47-cysteine 68, and cysteine 51-cysteine 70.

The protein belongs to the long (4 C-C) scorpion toxin superfamily. Sodium channel inhibitor family. As to expression, expressed by the venom gland.

The protein resides in the secreted. Its function is as follows. Putative sodium channel toxin. In Tityus serrulatus (Brazilian scorpion), this protein is Putative sodium channel toxin Ts40.